Consider the following 156-residue polypeptide: Small ribosomal subunit protein uS7 (156 aa).

This sequence belongs to the universal ribosomal protein uS7 family. As to quaternary structure, part of the 30S ribosomal subunit. Contacts proteins S9 and S11.

In terms of biological role, one of the primary rRNA binding proteins, it binds directly to 16S rRNA where it nucleates assembly of the head domain of the 30S subunit. Is located at the subunit interface close to the decoding center, probably blocks exit of the E-site tRNA. The sequence is that of Small ribosomal subunit protein uS7 from Citrobacter koseri (strain ATCC BAA-895 / CDC 4225-83 / SGSC4696).